The following is a 353-amino-acid chain: Protein AC18 (353 aa).

Its subcellular location is the host nucleus. It is found in the host cytoplasm. May play a role in occlusion-derived virions (ODV) formation and/or regulation of late viral gene expression. The chain is Protein AC18 (DA41) from Autographa californica nuclear polyhedrosis virus (AcMNPV).